Consider the following 272-residue polypeptide: Phosphoglycolate phosphatase 1 (272 aa).

Aspartate 19 acts as the Nucleophile in catalysis. 3 residues coordinate Mg(2+): aspartate 19, aspartate 21, and aspartate 182.

Belongs to the HAD-like hydrolase superfamily. CbbY/CbbZ/Gph/YieH family. Mg(2+) serves as cofactor.

The enzyme catalyses 2-phosphoglycolate + H2O = glycolate + phosphate. The protein operates within organic acid metabolism; glycolate biosynthesis; glycolate from 2-phosphoglycolate: step 1/1. Its function is as follows. Specifically catalyzes the dephosphorylation of 2-phosphoglycolate. Is involved in the dissimilation of the intracellular 2-phosphoglycolate formed during the DNA repair of 3'-phosphoglycolate ends, a major class of DNA lesions induced by oxidative stress. This is Phosphoglycolate phosphatase 1 from Pseudomonas aeruginosa (strain ATCC 15692 / DSM 22644 / CIP 104116 / JCM 14847 / LMG 12228 / 1C / PRS 101 / PAO1).